The following is a 174-amino-acid chain: ATP synthase subunit b (174 aa).

Residues 15-33 (NPGLVIWTLVTFSVVVFVL) traverse the membrane as a helical segment.

This sequence belongs to the ATPase B chain family. In terms of assembly, F-type ATPases have 2 components, F(1) - the catalytic core - and F(0) - the membrane proton channel. F(1) has five subunits: alpha(3), beta(3), gamma(1), delta(1), epsilon(1). F(0) has three main subunits: a(1), b(2) and c(10-14). The alpha and beta chains form an alternating ring which encloses part of the gamma chain. F(1) is attached to F(0) by a central stalk formed by the gamma and epsilon chains, while a peripheral stalk is formed by the delta and b chains.

The protein resides in the cell inner membrane. Its function is as follows. F(1)F(0) ATP synthase produces ATP from ADP in the presence of a proton or sodium gradient. F-type ATPases consist of two structural domains, F(1) containing the extramembraneous catalytic core and F(0) containing the membrane proton channel, linked together by a central stalk and a peripheral stalk. During catalysis, ATP synthesis in the catalytic domain of F(1) is coupled via a rotary mechanism of the central stalk subunits to proton translocation. Component of the F(0) channel, it forms part of the peripheral stalk, linking F(1) to F(0). The polypeptide is ATP synthase subunit b (Leptospira biflexa serovar Patoc (strain Patoc 1 / Ames)).